The following is a 208-amino-acid chain: FMN-dependent NADH:quinone oxidoreductase (208 aa).

FMN-binding positions include S10, 16 to 18 (SVS), 94 to 97 (MYNF), and 138 to 141 (SRGG).

It belongs to the azoreductase type 1 family. In terms of assembly, homodimer. The cofactor is FMN.

The enzyme catalyses 2 a quinone + NADH + H(+) = 2 a 1,4-benzosemiquinone + NAD(+). The catalysed reaction is N,N-dimethyl-1,4-phenylenediamine + anthranilate + 2 NAD(+) = 2-(4-dimethylaminophenyl)diazenylbenzoate + 2 NADH + 2 H(+). Quinone reductase that provides resistance to thiol-specific stress caused by electrophilic quinones. Its function is as follows. Also exhibits azoreductase activity. Catalyzes the reductive cleavage of the azo bond in aromatic azo compounds to the corresponding amines. The chain is FMN-dependent NADH:quinone oxidoreductase from Hyphomonas neptunium (strain ATCC 15444).